The following is a 228-amino-acid chain: ATP-dependent dethiobiotin synthetase BioD 1 (228 aa).

Position 13 to 18 (13 to 18 (EVGKTV)) interacts with ATP. Residue Thr17 participates in Mg(2+) binding. Lys38 is a catalytic residue. Ser42 lines the substrate pocket. ATP contacts are provided by residues Asp55, 116–119 (EGAG), 176–177 (ND), and 205–207 (PWL). Positions 55 and 116 each coordinate Mg(2+).

Belongs to the dethiobiotin synthetase family. In terms of assembly, homodimer. It depends on Mg(2+) as a cofactor.

It is found in the cytoplasm. The catalysed reaction is (7R,8S)-7,8-diammoniononanoate + CO2 + ATP = (4R,5S)-dethiobiotin + ADP + phosphate + 3 H(+). It participates in cofactor biosynthesis; biotin biosynthesis; biotin from 7,8-diaminononanoate: step 1/2. Catalyzes a mechanistically unusual reaction, the ATP-dependent insertion of CO2 between the N7 and N8 nitrogen atoms of 7,8-diaminopelargonic acid (DAPA, also called 7,8-diammoniononanoate) to form a ureido ring. The sequence is that of ATP-dependent dethiobiotin synthetase BioD 1 from Salmonella typhi.